Reading from the N-terminus, the 388-residue chain is LL-diaminopimelate aminotransferase (388 aa).

The substrate site is built by Y13, G38, K102, Y126, and N176. Pyridoxal 5'-phosphate-binding positions include 101–102 (SK), Y126, N176, Y207, and 235–237 (SLS). N6-(pyridoxal phosphate)lysine is present on K238. R246 contacts pyridoxal 5'-phosphate. R364 contributes to the substrate binding site.

It belongs to the class-I pyridoxal-phosphate-dependent aminotransferase family. LL-diaminopimelate aminotransferase subfamily. In terms of assembly, homodimer. It depends on pyridoxal 5'-phosphate as a cofactor.

The enzyme catalyses (2S,6S)-2,6-diaminopimelate + 2-oxoglutarate = (S)-2,3,4,5-tetrahydrodipicolinate + L-glutamate + H2O + H(+). It functions in the pathway amino-acid biosynthesis; L-lysine biosynthesis via DAP pathway; LL-2,6-diaminopimelate from (S)-tetrahydrodipicolinate (aminotransferase route): step 1/1. Involved in the synthesis of meso-diaminopimelate (m-DAP or DL-DAP), required for both lysine and peptidoglycan biosynthesis. Catalyzes the direct conversion of tetrahydrodipicolinate to LL-diaminopimelate. This Dehalococcoides mccartyi (strain CBDB1) protein is LL-diaminopimelate aminotransferase.